Consider the following 2121-residue polypeptide: PAM2 domain-containing protein UPA2 (2121 aa).

The PAM2 1 signature appears at 1–17; it reads MEGSSLNVAAPVFKPSG. Disordered regions lie at residues 14 to 46, 262 to 302, 375 to 397, 475 to 507, 522 to 543, and 586 to 819; these read KPSG…AVHA, QPED…SALT, AATT…PPST, ARRR…SSGG, ANSD…QKPL, and DLGR…QFSR. An effector domain region spans residues 339–599; sequence PWPYSLGLPD…GFGYEPQSPN (261 aa). Over residues 596 to 607 the composition is skewed to polar residues; that stretch reads QSPNAAPNGTTS. Acidic residues-rich tracts occupy residues 626–637 and 646–658; these read EENDELGFDGEE and EDAD…EEPN. Over residues 679–689 the composition is skewed to basic and acidic residues; it reads DGHDRYADDNQ. Residues 690-712 are compositionally biased toward polar residues; it reads SHASNDDSLQDSLTPSDEQFSNP. A compositionally biased stretch (basic and acidic residues) spans 719 to 735; the sequence is REERILRRQHRAAERAA. A compositionally biased stretch (basic residues) spans 736–745; that stretch reads RRERKQRQRG. Polar residues-rich tracts occupy residues 749-758 and 777-788; these read SDNTLPSSSI and NPRNGNTISNPS. Short sequence motifs (PAM2) lie at residues 858–874 and 920–937; these read SGIS…KFGG and TNAA…PGLF. Residues 950 to 960 show a composition bias toward polar residues; that stretch reads NSLSASPSIAV. The segment at 950–1012 is disordered; it reads NSLSASPSIA…PSPPRPKASA (63 aa). Positions 966–981 are enriched in basic and acidic residues; the sequence is GADHRETENRDMQGRE. The short motif at 1046-1063 is the PAM2 4 element; that stretch reads SHESRLTADAPSFVPTWA. 3 disordered regions span residues 1076-1096, 1119-1261, and 1337-1369; these read KRPS…KDLP, SKDD…EEES, and SHAR…NSSL. Polar residues predominate over residues 1198 to 1207; it reads HSPSISQTSD. Acidic residues predominate over residues 1248–1261; that stretch reads GGNDEDDYEDEEES. The segment covering 1345-1369 has biased composition (polar residues); the sequence is ETQSTIRPLRQRNSSSDVKTANSSL. Positions 1783-2054 form a coiled coil; the sequence is LEKQAQANAD…EAKLQTLTAS (272 aa). The tract at residues 2099–2121 is disordered; sequence SFASTAGSQGKKEVEVDEGGWWS. A GWW motif is present at residues 2118–2120; that stretch reads GWW.

The protein belongs to the UPA1 PAM2 domain-binding protein family. Might form homodimers via its C-terminal coiled-coil domain. Part of large ribonucleoprotein complexes (mRNPs) containing RNA-binding proteins RRM4 and PAB1, endosome-binding protein UPA1, core scaffold protein UPA2 and associated factor GRP1. Interacts (via PAM2 motifs) with PAB1.

It is found in the cytoplasm. It localises to the cytoskeleton. The protein resides in the endosome. In terms of biological role, core component of endosomal mRNA transport and appears to carry out crucial scaffolding functions. The endosomal mRNA transport regulates polarity of the infectious hyphae by transporting a broad spectrum of cargo mRNAs from the nucleus to cell poles. This is PAM2 domain-containing protein UPA2 from Mycosarcoma maydis (Corn smut fungus).